Here is a 423-residue protein sequence, read N- to C-terminus: MLDLKFVRSSPDIVRHALINRNMSTELIDSLLEYDIAWRKCLTEGDELKHKRNVVTREIAKLKKENKDTLSKIEEMQGINSRIKEIDDIIRDYKSKIHEIMLRIPNIPSSTTPVGKDENDNPVVRIVGEPRKFTFTPKPHWEIGEALDILDFEKGAKISGQGFTVYKGMGAKLERALVNFMLEVHARQGYLEVFPPVLINEKAMTGTGQLPKFKDDMYLCTDGYYLAPTAEVPVTNLFMDDYIEKLPVFLTAYTACFRREAGKHGQDTRGIIRQHQFNKVELVKFVKPETSYDELEKLTNDAEEILKLLKLPYRVVNLCTGDIGFSAAKTYDLEVWVPTQEKYREISSCSNFENFQARRANIRFRTPDGPQFVHTLNGSGLAVGRTVVAILENYQREDGSVEIPEVLRPYLGGAKEISNEVKT.

229–231 is an L-serine binding site; that stretch reads TAE. Residue 258–260 participates in ATP binding; the sequence is RRE. Position 281 (E281) interacts with L-serine. Residue 345–348 participates in ATP binding; the sequence is EISS. Residue S379 coordinates L-serine.

This sequence belongs to the class-II aminoacyl-tRNA synthetase family. Type-1 seryl-tRNA synthetase subfamily. As to quaternary structure, homodimer. The tRNA molecule binds across the dimer.

Its subcellular location is the cytoplasm. The enzyme catalyses tRNA(Ser) + L-serine + ATP = L-seryl-tRNA(Ser) + AMP + diphosphate + H(+). It catalyses the reaction tRNA(Sec) + L-serine + ATP = L-seryl-tRNA(Sec) + AMP + diphosphate + H(+). The protein operates within aminoacyl-tRNA biosynthesis; selenocysteinyl-tRNA(Sec) biosynthesis; L-seryl-tRNA(Sec) from L-serine and tRNA(Sec): step 1/1. Catalyzes the attachment of serine to tRNA(Ser). Is also able to aminoacylate tRNA(Sec) with serine, to form the misacylated tRNA L-seryl-tRNA(Sec), which will be further converted into selenocysteinyl-tRNA(Sec). The chain is Serine--tRNA ligase (serS1) from Methanosarcina barkeri (strain Fusaro / DSM 804).